Here is a 400-residue protein sequence, read N- to C-terminus: Transcription initiation factor IIF subunit beta (400 aa).

Residues Met1–Val19 show a composition bias toward polar residues. The disordered stretch occupies residues Met1–Asn47. Residues Ser28, Ser34, and Ser56 each carry the phosphoserine modification. Residues Leu33–Asn47 show a composition bias toward acidic residues. 2 disordered regions span residues Gln165–Asp194 and Thr366–Val400. A compositionally biased stretch (basic residues) spans Lys174–His189. Residues Ala386–Val400 are compositionally biased toward acidic residues.

This sequence belongs to the TFIIF beta subunit family. In terms of assembly, TFIIF is composed of three different subunits: TFG1/RAP74, TFG2/RAP30 and TAF14.

It is found in the nucleus. Functionally, TFIIF is a general transcription initiation factor that binds to RNA polymerase II. Its functions include the recruitment of RNA polymerase II to the promoter bound DNA-TBP-TFIIB complex, decreasing the affinity of RNA polymerase II for non-specific DNA, allowing for the subsequent recruitment of TFIIE and TFIIH, and facilitating RNA polymerase II elongation. This is Transcription initiation factor IIF subunit beta (TFG2) from Saccharomyces cerevisiae (strain ATCC 204508 / S288c) (Baker's yeast).